A 494-amino-acid polypeptide reads, in one-letter code: UPF0371 protein SP70585_0405 (494 aa).

Belongs to the UPF0371 family.

In Streptococcus pneumoniae (strain 70585), this protein is UPF0371 protein SP70585_0405.